Consider the following 300-residue polypeptide: Acetaldehyde dehydrogenase (300 aa).

11 to 14 (SGNI) contributes to the NAD(+) binding site. Residue cysteine 129 is the Acyl-thioester intermediate of the active site. Residues 160 to 168 (SVGPGTRQN) and asparagine 271 each bind NAD(+).

This sequence belongs to the acetaldehyde dehydrogenase family.

It carries out the reaction acetaldehyde + NAD(+) + CoA = acetyl-CoA + NADH + H(+). The protein is Acetaldehyde dehydrogenase (mhpF) of Pseudoalteromonas translucida (strain TAC 125).